Here is a 318-residue protein sequence, read N- to C-terminus: Cephalosporin-C deacetylase (318 aa).

Residue Tyr-91 coordinates substrate. Ser-181 (nucleophile) is an active-site residue. Residues Asp-269 and His-298 each act as charge relay system in the active site.

This sequence belongs to the carbohydrate esterase 7 family. As to quaternary structure, homohexamer.

The protein resides in the cytoplasm. It catalyses the reaction Deacetylation of xylans and xylo-oligosaccharides.. The catalysed reaction is cephalosporin C + H2O = deacetylcephalosporin C + acetate + H(+). In terms of biological role, esterase that removed acetyl groups from a number of O-acetylated small substrates, such as acetylated xylose, short xylooligosaccharides and cephalosporin C. Has no activity towards polymeric acetylated xylan. Cannot cleave amide linkages. The protein is Cephalosporin-C deacetylase (cah) of Bacillus subtilis (strain 168).